The primary structure comprises 195 residues: Peptidyl-tRNA hydrolase (195 aa).

Y17 provides a ligand contact to tRNA. The active-site Proton acceptor is the H22. Positions 68, 70, and 116 each coordinate tRNA.

This sequence belongs to the PTH family. As to quaternary structure, monomer.

The protein localises to the cytoplasm. The catalysed reaction is an N-acyl-L-alpha-aminoacyl-tRNA + H2O = an N-acyl-L-amino acid + a tRNA + H(+). In terms of biological role, hydrolyzes ribosome-free peptidyl-tRNAs (with 1 or more amino acids incorporated), which drop off the ribosome during protein synthesis, or as a result of ribosome stalling. Its function is as follows. Catalyzes the release of premature peptidyl moieties from peptidyl-tRNA molecules trapped in stalled 50S ribosomal subunits, and thus maintains levels of free tRNAs and 50S ribosomes. This chain is Peptidyl-tRNA hydrolase, found in Shewanella putrefaciens (strain CN-32 / ATCC BAA-453).